The sequence spans 387 residues: Alpha-2B adrenergic receptor (387 aa).

The chain crosses the membrane as a helical span at residues Ala-1–Leu-25. At Thr-26 to Leu-36 the chain is on the cytoplasmic side. The chain crosses the membrane as a helical span at residues Phe-37 to Leu-62. Over Gly-63 to Cys-72 the chain is Extracellular. A disulfide bond links Cys-72 and Cys-151. The helical transmembrane segment at Xaa-73–Leu-95 threads the bilayer. At Asp-96–Lys-117 the chain is on the cytoplasmic side. A helical transmembrane segment spans residues Cys-118–Asp-140. Topologically, residues Gln-141–Glu-156 are extracellular. Residues Ala-157–Leu-180 form a helical membrane-spanning segment. The Cytoplasmic segment spans residues Arg-181–Val-351. A disordered region spans residues Arg-193–Ser-303. Residues Pro-279 to Gly-290 show a composition bias toward acidic residues. A helical membrane pass occupies residues Leu-352–Ile-375. The Extracellular portion of the chain corresponds to Cys-376–His-384. Residues Gly-385 to Phe-387 form a helical membrane-spanning segment.

It belongs to the G-protein coupled receptor 1 family. Adrenergic receptor subfamily. ADRA2B sub-subfamily. As to quaternary structure, interacts with RAB26. Interacts with PPP1R9B. Interacts with GGA1, GGA2 and GGA3.

It localises to the cell membrane. In terms of biological role, alpha-2 adrenergic receptors mediate the catecholamine-induced inhibition of adenylate cyclase through the action of G proteins. The sequence is that of Alpha-2B adrenergic receptor (ADRA2B) from Macroscelides proboscideus (Short-eared elephant shrew).